The following is a 435-amino-acid chain: uncharacterized protein (435 aa).

The F-box domain occupies 7–58 (PFPITKLPLVPRCKILKFFDYGDLLDISLCSKRMAQTVRDIHITADLHYLTL).

This is an uncharacterized protein from Caenorhabditis elegans.